The following is a 707-amino-acid chain: Polyribonucleotide nucleotidyltransferase (707 aa).

The Mg(2+) site is built by aspartate 488 and aspartate 494. The region spanning 554–613 is the KH domain; that stretch reads PRLFTMKINQDKIREVIGKGGETIRSITAETGTEINIAEDGTITIAATTQEAGDAAKKRI. The region spanning 623 to 693 is the S1 motif domain; the sequence is GKVYEGTVVK…DRGRVRLSIK (71 aa).

The protein belongs to the polyribonucleotide nucleotidyltransferase family. Mg(2+) serves as cofactor.

The protein resides in the cytoplasm. It carries out the reaction RNA(n+1) + phosphate = RNA(n) + a ribonucleoside 5'-diphosphate. Involved in mRNA degradation. Catalyzes the phosphorolysis of single-stranded polyribonucleotides processively in the 3'- to 5'-direction. This Neisseria meningitidis serogroup B (strain ATCC BAA-335 / MC58) protein is Polyribonucleotide nucleotidyltransferase.